Consider the following 286-residue polypeptide: MKIRVPATSANLGPGFDSMGIAVSKYLEVDILEESEQWFIEHDLGDIPNDDSNLLIQTALRLAPNIPAHRLKMTSDIPLARGLGSSSSVIVAGIELANQLGHLNLTADRKLAIATRIEGHPDNVAPAIFGQLVIASQIGKDVDYIIAPFPDLSLVCFIPDYELKTSDSRDVLPKQLSYKQAVAASSVANLAIAALLTGNLKKAGRAIENDQFHEIYRQRLVREFQPIKRAAAANGAYATYLSGAGPAIMVMCPNEKKMAIYEAIEQLGLIGQLVSLELDRQGLCLV.

An ATP-binding site is contributed by 78–88; it reads PLARGLGSSSS.

The protein belongs to the GHMP kinase family. Homoserine kinase subfamily.

The protein localises to the cytoplasm. It catalyses the reaction L-homoserine + ATP = O-phospho-L-homoserine + ADP + H(+). It functions in the pathway amino-acid biosynthesis; L-threonine biosynthesis; L-threonine from L-aspartate: step 4/5. Catalyzes the ATP-dependent phosphorylation of L-homoserine to L-homoserine phosphate. This Streptococcus equi subsp. zooepidemicus (strain H70) protein is Homoserine kinase.